Consider the following 72-residue polypeptide: Crustacean hyperglycemic hormone (72 aa).

At glutamine 1 the chain carries Pyrrolidone carboxylic acid. The residue at position 3 (phenylalanine 3) is a D-phenylalanine; in form CHH-II. 3 disulfide bridges follow: cysteine 7–cysteine 43, cysteine 23–cysteine 39, and cysteine 26–cysteine 52. The residue at position 72 (valine 72) is a Valine amide.

Stereoinversion of L-Phe (in CHH-I) to D-Phe (in CHH-II) the two forms are present in a ratio 3:1 (CHH-I/CHH-II). As to expression, produced by the medulla terminalis X-organ in the eyestalks and transported to the sinus gland where they are stored and released.

Its subcellular location is the secreted. Functionally, hormone found in the sinus gland of isopods and decapods which controls the blood sugar level. Has a secretagogue action over the amylase released from the midgut gland. May act as a stress hormone and may be involved in the control of molting and reproduction. The protein is Crustacean hyperglycemic hormone of Procambarus bouvieri (Mexican crayfish).